We begin with the raw amino-acid sequence, 390 residues long: Dual-specificity RNA methyltransferase RlmN (390 aa).

The active-site Proton acceptor is the E126. Residues T134–D374 enclose the Radical SAM core domain. A disulfide bond links C141 and C379. 3 residues coordinate [4Fe-4S] cluster: C148, C152, and C155. S-adenosyl-L-methionine is bound by residues G205–E206, S237, S259–H261, and N336. C379 acts as the S-methylcysteine intermediate in catalysis.

This sequence belongs to the radical SAM superfamily. RlmN family. [4Fe-4S] cluster is required as a cofactor.

The protein resides in the cytoplasm. It carries out the reaction adenosine(2503) in 23S rRNA + 2 reduced [2Fe-2S]-[ferredoxin] + 2 S-adenosyl-L-methionine = 2-methyladenosine(2503) in 23S rRNA + 5'-deoxyadenosine + L-methionine + 2 oxidized [2Fe-2S]-[ferredoxin] + S-adenosyl-L-homocysteine. The catalysed reaction is adenosine(37) in tRNA + 2 reduced [2Fe-2S]-[ferredoxin] + 2 S-adenosyl-L-methionine = 2-methyladenosine(37) in tRNA + 5'-deoxyadenosine + L-methionine + 2 oxidized [2Fe-2S]-[ferredoxin] + S-adenosyl-L-homocysteine. Its function is as follows. Specifically methylates position 2 of adenine 2503 in 23S rRNA and position 2 of adenine 37 in tRNAs. m2A2503 modification seems to play a crucial role in the proofreading step occurring at the peptidyl transferase center and thus would serve to optimize ribosomal fidelity. This Acidiphilium cryptum (strain JF-5) protein is Dual-specificity RNA methyltransferase RlmN.